A 285-amino-acid polypeptide reads, in one-letter code: uncharacterized protein (285 aa).

Helical transmembrane passes span 7-29, 49-71, 95-117, 137-156, 232-254, and 259-281; these read FYRLVKNTLLTAFILSLILLTLQ, LVVWNAYYTYFFIPEGVILSTFF, IFLYCSIPFLTFFLISALLSNTL, FFSEVPAGTFVSFGAVVLHA, KVVNYVNVATLPLFFFLSFTVAL, and GGLSYYAFASLFIVVHQLIIFVV.

It localises to the cell membrane. This is an uncharacterized protein from Aquifex aeolicus (strain VF5).